The primary structure comprises 363 residues: Peptide chain release factor 1 (363 aa).

Glutamine 237 is subject to N5-methylglutamine. Residues 286–295 (EKRRSAEATT) are compositionally biased toward basic and acidic residues. Residues 286–305 (EKRRSAEATTRRNLVGSGDR) are disordered.

It belongs to the prokaryotic/mitochondrial release factor family. Methylated by PrmC. Methylation increases the termination efficiency of RF1.

The protein localises to the cytoplasm. In terms of biological role, peptide chain release factor 1 directs the termination of translation in response to the peptide chain termination codons UAG and UAA. The protein is Peptide chain release factor 1 of Shewanella amazonensis (strain ATCC BAA-1098 / SB2B).